We begin with the raw amino-acid sequence, 119 residues long: MIQKNAILDVADNSGARKVLCIGFLGGKKRALVGDVIVVSARVVAPRGKVNKGRVYKAVVVRTKGPIRRLDGSTIRFSSNAVVLVNDQGDPLGTRVFGPVRKLPVGEFTKVMSLAVEVL.

The protein belongs to the universal ribosomal protein uL14 family. Part of the 50S ribosomal subunit. Forms a cluster with proteins L3 and L19. In the 70S ribosome, L14 and L19 interact and together make contacts with the 16S rRNA in bridges B5 and B8.

Functionally, binds to 23S rRNA. Forms part of two intersubunit bridges in the 70S ribosome. The protein is Large ribosomal subunit protein uL14 of Anaplasma marginale (strain St. Maries).